Reading from the N-terminus, the 418-residue chain is MAFIAALGIFMAGICPAVLCFPNGTLGRDTAVQEDQDNGTQVDSLTLASINTDFAFSLYKELALKNPDKNIVFSPLSISAALAIVSLGAKCNTLQEILEGLKFNLTETPEADIHLGFRHLLHMLSQSGKEEQINIAVSMFIEKHLQILAEFQEKVRSLYQAEAFTADFQQADEARKFINDYVRKETQGKIQELLSDLVERTSMVLVNYIYFKGKWKMPFDPRVTLKSEFYLDEKRSVKVPMMKIEDLTTPYFRDEELSCSVVELKYIGNASALFILPDQGRIEQVEASLQPETLRKWKDSLRPRKIDLLYLPKFLVSTDYSLEDVLSELGIKEVFSAQADLSRVTGTKDLSVSQVVHKAMLEVAEKGTEAAAATGVKFVFRSGRVPTMTVRFDRPFLMVVSHTGVESILFLAKVTNPN.

A signal peptide spans 1–28 (MAFIAALGIFMAGICPAVLCFPNGTLGR). N23, N38, N104, and N269 each carry an N-linked (GlcNAc...) asparagine glycan.

This sequence belongs to the serpin family.

It localises to the secreted. This is Serine proteinase inhibitor 2.4 from Apodemus sylvaticus (European woodmouse).